We begin with the raw amino-acid sequence, 724 residues long: Disks large homolog 4 (724 aa).

S-palmitoyl cysteine attachment occurs at residues Cys-3 and Cys-5. The segment at 15 to 35 is disordered; it reads QDEDTPPLEHSPAHLPNQANS. 2 PDZ domains span residues 65 to 151 and 160 to 246; these read EITL…VMRR and EIKL…VAKP. Ser-73 and Ser-142 each carry phosphoserine. Position 240 is a phosphotyrosine (Tyr-240). Ser-295 carries the post-translational modification Phosphoserine. Residues 313–393 form the PDZ 3 domain; that stretch reads RIVIHRGSTG…QTVTIIAQYK (81 aa). Phosphoserine occurs at positions 415 and 418. Position 420 is a phosphothreonine (Thr-420). Ser-422, Ser-425, Ser-449, and Ser-480 each carry phosphoserine. Residues 428–498 form the SH3 domain; the sequence is KRGFYIRALF…PSKRRVERRE (71 aa). One can recognise a Guanylate kinase-like domain in the interval 534–709; it reads ARPIIILGPT…IYHKVKRVIE (176 aa). Position 580 is a phosphotyrosine (Tyr-580). Ser-606 and Ser-654 each carry phosphoserine. Tyr-715 bears the Phosphotyrosine mark.

The protein belongs to the MAGUK family. Interacts through its PDZ domains with ANO2 and NETO1. Interacts through its first two PDZ domains with GRIN2A, GRIN2B, GRIN2C, GRIN2D. Interacts with ASIC3. Interacts with SEMA4C. Interacts with CXADR. Interacts with KCND2. Interacts with SYNGAP1. Interacts with LRRC4 and LRRC4B. Interacts with ERBB4. Interacts with KCNA1, KCNA2, KCNA3 and KCNA4. Interacts through its first PDZ domain with GRIK2, KCNA4 and CRIPT. Interacts through its second PDZ domain with the PDZ domain of NOS1 or the C-terminus of CAPON. Interacts through its third PDZ domain with NLGN1 and CRIPT, and probably with NLGN2 and NLGN3. Interacts through its guanylate kinase-like domain with KIF13B. Interacts through its guanylate kinase-like domain with DLGAP1/GKAP, DLGAP2, DLGAP3, DLGAP4, MAP1A, BEGAIN and SIPA1L1. Isoform 2 interacts through an L27 domain with HGS/HRS and the first L27 domain of CASK. Interacts with ADR1B and ANKS1B. May interact with HTR2A. Interacts with ADAM22. Interacts with KLHL17 and LGI1. Interacts with FRMPD4 (via C-terminus). Interacts with LRFN1, LRFN2 and LRFN4. Interacts (via N-terminal tandem pair of PDZ domains) with GPER1 (via C-terminus tail motif); the interaction is direct and induces the increase of GPER1 protein levels residing at the plasma membrane surface in a estradiol-independent manner. Interacts (via N-terminus tandem pair of PDZ domains) with NOS1 (via N-terminal domain). Interacts with SHANK3. Interacts with KCNJ4. Interacts with GPR85. Interacts with CACNG2 and MPP2 (via the SH3-Guanylate kinase-like sub-module). Interacts with ADGRB1. Found in a complex with PRR7 and GRIN1. Interacts (via PDZ3 domain and to lesser degree via PDZ2 domain) with PRR7. Component of the postsynaptic hippocampal AMPA-type glutamate receptor (AMPAR) complex, at least composed of pore forming AMPAR subunits GRIA1, GRIA2 and GRIA3 and AMPAR auxiliary proteins SHISA6 and SHISA7. Interacts (via its first two PDZ domains) with SHISA6 and SHISA7 (via PDZ-binding motif); the interaction is direct. Interacts with RPH3A and GRIN2A; this ternary complex regulates NMDA receptor composition at postsynaptic membranes. Interacts with ABR and BCR. Interacts with DGKI (via PDZ-binding motif); controls the localization of DGKI to the synapse. Interacts with C9orf72, SMCR8 and RAB39B. Interacts with ZDHHC5. Interacts with PTEN (via PDZ domain-binding motif); the interaction is induced by NMDA and is required for PTEN location at postsynaptic density. Found in a complex with GRIA1, GRIA2, GRIA3, GRIA4, CACNG8 and CNIH2. Interacts with FAM81A; the interaction facilitates condensate formation via liquid-liquid phase separation. Interacts with ADGRL3. Interacts with SORCS3. Post-translationally, palmitoylated. Palmitoylation is required for targeting to postsynaptic density, plasma membrane and synapses. Palmitoylation by ZDHHC2 occurs when the synaptic activity decreases and induces DLG4 synaptic clustering. Palmitoylation by ZDHHC15 regulates trafficking to the postsynaptic density and function in synaptogenesis. Palmitoylation may play a role in glutamate receptor GRIA1 synapse clustering. Depalmitoylated by ABHD17A and ABHD17B and to a lesser extent by ABHD17C, ABHD12, ABHD13, LYPLA1 and LYPLA2. Undergoes rapid synaptic palmitoylation/depalmitoylation cycles during neuronal development which slow down in mature neurons. Ubiquitinated by MDM2 in response to NMDA receptor activation, leading to proteasome-mediated degradation of DLG4 which is required for AMPA receptor endocytosis. In terms of tissue distribution, brain.

It localises to the cell membrane. The protein localises to the postsynaptic density. The protein resides in the synapse. It is found in the cytoplasm. Its subcellular location is the cell projection. It localises to the axon. The protein localises to the dendritic spine. The protein resides in the dendrite. It is found in the presynapse. Functionally, postsynaptic scaffolding protein that plays a critical role in synaptogenesis and synaptic plasticity by providing a platform for the postsynaptic clustering of crucial synaptic proteins. Interacts with the cytoplasmic tail of NMDA receptor subunits and shaker-type potassium channels. Required for synaptic plasticity associated with NMDA receptor signaling. Overexpression or depletion of DLG4 changes the ratio of excitatory to inhibitory synapses in hippocampal neurons. May reduce the amplitude of ASIC3 acid-evoked currents by retaining the channel intracellularly. May regulate the intracellular trafficking of ADR1B. Also regulates AMPA-type glutamate receptor (AMPAR) immobilization at postsynaptic density keeping the channels in an activated state in the presence of glutamate and preventing synaptic depression. Under basal conditions, cooperates with FYN to stabilize palmitoyltransferase ZDHHC5 at the synaptic membrane through FYN-mediated phosphorylation of ZDHHC5 and its subsequent inhibition of association with endocytic proteins. The sequence is that of Disks large homolog 4 from Homo sapiens (Human).